The primary structure comprises 206 residues: Small ribosomal subunit protein uS4 (206 aa).

An S4 RNA-binding domain is found at 96–168 (SRLDNVVYRM…LELAEQREKP (73 aa)).

The protein belongs to the universal ribosomal protein uS4 family. In terms of assembly, part of the 30S ribosomal subunit. Contacts protein S5. The interaction surface between S4 and S5 is involved in control of translational fidelity.

One of the primary rRNA binding proteins, it binds directly to 16S rRNA where it nucleates assembly of the body of the 30S subunit. Its function is as follows. With S5 and S12 plays an important role in translational accuracy. In Baumannia cicadellinicola subsp. Homalodisca coagulata, this protein is Small ribosomal subunit protein uS4.